The following is a 737-amino-acid chain: MTDSPDATTGGCPVAHGDRLPHPTQGGANTHWWPNRLNLKLLAKNPAVADPMGEEFDYAAEFKTLDLPAVKADIQEVLTTSQDWWPADFGHYGPLMIRMAWHSAGTYRVSDGRGGAGTGQQRFAPLNSWPDNVSLDKARRLLWPVKQKYGRKLSWADLMILAGNVALESMGFETFGFAGGRVDAWEPEDDVYWGAETTWLGSDQRISGGEQRELEKPLGATHMGLIYVNPEGPEGKPDPVAAARDIRETFGRMAMNDEETVALIAGGHTFGKTHGAAPDSNLGPDSEAAPLEAQGLGWHNSHGTGKGADTITSGLEVTWTSTPTQWSNGFFENLFGYEYELYQGPGGGWQWRPKDGAGEGTVPDAHDPSKKIAPNMLTTDLSLKVDPIYEPISRRFWENPQEFADAFARAWFKLTHRDMGPADRYLGPEVPSEELIWQDPIPKPDHELVGPAEIAELKGRIAESGLTVRQLVSTAWAAASTFRGSDKRGGANGGRIRLEPQRSWEVNEPDQLATVISTLEGIQESFNAGSGAKKVSFADLVVLAGGVGVEQAAQAAGFDVEVPFTPGRGDATAEQTDVESFSHLEPSSDGFRNYLGKGHPLPAEYQLVDKANLLTLSAPEMTVLVGGLRVLGANYQQSEQGVFTEKPGTLTNDFFVNLLQMGNTWKATDETSETFEATDASGQVKWTGTRFDLVFGSNSELRAVAEVYASDDAKEKFVRDFVAAWDKVMNLDRFDLA.

The disordered stretch occupies residues 1–29 (MTDSPDATTGGCPVAHGDRLPHPTQGGAN). The segment at residues 101 to 227 (WHSAGTYRVS…LGATHMGLIY (127 aa)) is a cross-link (tryptophyl-tyrosyl-methioninium (Trp-Tyr) (with M-253)). His-102 (proton acceptor) is an active-site residue. The segment at residues 227-253 (YVNPEGPEGKPDPVAAARDIRETFGRM) is a cross-link (tryptophyl-tyrosyl-methioninium (Tyr-Met) (with W-101)). Residue His-268 coordinates heme b.

It belongs to the peroxidase family. Peroxidase/catalase subfamily. As to quaternary structure, homodimer or homotetramer. Requires heme b as cofactor. Post-translationally, formation of the three residue Trp-Tyr-Met cross-link is important for the catalase, but not the peroxidase activity of the enzyme.

The enzyme catalyses H2O2 + AH2 = A + 2 H2O. It catalyses the reaction 2 H2O2 = O2 + 2 H2O. Functionally, bifunctional enzyme with both catalase and broad-spectrum peroxidase activity. In Saccharopolyspora erythraea (strain ATCC 11635 / DSM 40517 / JCM 4748 / NBRC 13426 / NCIMB 8594 / NRRL 2338), this protein is Catalase-peroxidase.